The primary structure comprises 268 residues: Phosphatidylglycerol--prolipoprotein diacylglyceryl transferase (268 aa).

4 helical membrane-spanning segments follow: residues 14–34 (LGPI…FAGW), 57–77 (LTFY…IIFY), 90–110 (FFLW…LIAF), and 117–137 (IGAN…IGLG). Arg140 provides a ligand contact to a 1,2-diacyl-sn-glycero-3-phospho-(1'-sn-glycerol). The next 3 membrane-spanning stretches (helical) occupy residues 174-194 (QLFE…LVTI), 200-220 (YLVL…CEFF), and 238-258 (GQIL…AVFI).

Belongs to the Lgt family.

It localises to the cell inner membrane. It carries out the reaction L-cysteinyl-[prolipoprotein] + a 1,2-diacyl-sn-glycero-3-phospho-(1'-sn-glycerol) = an S-1,2-diacyl-sn-glyceryl-L-cysteinyl-[prolipoprotein] + sn-glycerol 1-phosphate + H(+). Its pathway is protein modification; lipoprotein biosynthesis (diacylglyceryl transfer). Functionally, catalyzes the transfer of the diacylglyceryl group from phosphatidylglycerol to the sulfhydryl group of the N-terminal cysteine of a prolipoprotein, the first step in the formation of mature lipoproteins. The protein is Phosphatidylglycerol--prolipoprotein diacylglyceryl transferase of Francisella tularensis subsp. holarctica (strain FTNF002-00 / FTA).